Consider the following 230-residue polypeptide: Enolase-phosphatase E1 (230 aa).

This sequence belongs to the HAD-like hydrolase superfamily. MasA/MtnC family. Monomer. Mg(2+) is required as a cofactor.

It catalyses the reaction 5-methylsulfanyl-2,3-dioxopentyl phosphate + H2O = 1,2-dihydroxy-5-(methylsulfanyl)pent-1-en-3-one + phosphate. It functions in the pathway amino-acid biosynthesis; L-methionine biosynthesis via salvage pathway; L-methionine from S-methyl-5-thio-alpha-D-ribose 1-phosphate: step 3/6. Its pathway is amino-acid biosynthesis; L-methionine biosynthesis via salvage pathway; L-methionine from S-methyl-5-thio-alpha-D-ribose 1-phosphate: step 4/6. Bifunctional enzyme that catalyzes the enolization of 2,3-diketo-5-methylthiopentyl-1-phosphate (DK-MTP-1-P) into the intermediate 2-hydroxy-3-keto-5-methylthiopentenyl-1-phosphate (HK-MTPenyl-1-P), which is then dephosphorylated to form the acireductone 1,2-dihydroxy-3-keto-5-methylthiopentene (DHK-MTPene). The polypeptide is Enolase-phosphatase E1 (Sulfurihydrogenibium sp. (strain YO3AOP1)).